The following is a 483-amino-acid chain: BTB/POZ domain and ankyrin repeat-containing protein COCH (483 aa).

Positions Ser-25–Pro-105 constitute a BTB domain. The segment at Arg-111–Thr-125 adopts a C2HC NPR-type zinc-finger fold. Zn(2+) is bound by residues Cys-114, Cys-119, His-121, and Cys-124. ANK repeat units follow at residues Gln-249 to Asp-278, Glu-279 to Phe-308, Thr-313 to Val-342, and Asp-346 to Leu-380. 2 disordered regions span residues Glu-395–Met-435 and Met-450–Tyr-483. The segment covering Asn-398 to Asn-414 has biased composition (low complexity). Over residues Asp-456 to Asn-465 the composition is skewed to basic and acidic residues.

The protein belongs to the plant 'ANKYRIN-BTB/POZ' family. 'NOOT-BOP-COCH-like' (NBCL) subfamily. As to quaternary structure, homodimer.

It localises to the nucleus. It is found in the cytoplasm. Its subcellular location is the cell membrane. It participates in protein modification; protein ubiquitination. Its function is as follows. May act as a substrate-specific adapter of an E3 ubiquitin-protein ligase complex (CUL3-RBX1-BTB) which mediates the ubiquitination and subsequent proteasomal degradation of target proteins. Transcriptional co-regulator involved in the promotion of leaf and floral meristem fate and determinacy. Promotes normal stipule growth and development. Required for the abscission of senescent organs, probably by regulating the cell wall disorganization in abscission zones (AZs, e.g. pulvini at the base of leaves). Down-regulates UNI expression in primordia of leaves and secondary inflorescences, and thereby controls their sizes and/or structures. Involved in the coordination of the symbiotic nodule developmental program. Promotes the formation of root nodules by interacting directly with APP1 to modulate the expression of the nuclear transcription factor Y subunit (NF-YA1), a key nodulin. Necessary for the robust maintenance of nodule identity throughout the nodule developmental program. The chain is BTB/POZ domain and ankyrin repeat-containing protein COCH from Pisum sativum (Garden pea).